The following is a 495-amino-acid chain: REST corepressor 3 (495 aa).

Residues Met-1–Thr-83 form the ELM2 domain. Lys-20 is covalently cross-linked (Glycyl lysine isopeptide (Lys-Gly) (interchain with G-Cter in SUMO2)). An SANT 1 domain is found at Pro-84 to Ser-135. The interval Leu-147–Lys-219 is disordered. Residues Ser-156 and Ser-171 each carry the phosphoserine modification. Residues Glu-162–Asn-184 are compositionally biased toward basic and acidic residues. Lys-193 participates in a covalent cross-link: Glycyl lysine isopeptide (Lys-Gly) (interchain with G-Cter in SUMO2). Positions Gln-205–Pro-217 are enriched in basic residues. Residues Ala-237–Gly-273 adopt a coiled-coil conformation. Lys-285 is covalently cross-linked (Glycyl lysine isopeptide (Lys-Gly) (interchain with G-Cter in SUMO2)). The SANT 2 domain maps to Lys-285–Asn-336. The segment at Ala-346–His-495 is disordered. Over residues Gln-348–Ala-357 the composition is skewed to polar residues. At Thr-376 the chain carries Phosphothreonine. The span at Pro-393–Thr-405 shows a compositional bias: pro residues. Low complexity predominate over residues Arg-419–Leu-428. An asymmetric dimethylarginine mark is found at Arg-445 and Arg-457. Polar residues predominate over residues Val-475 to His-495.

The protein belongs to the CoREST family.

It localises to the nucleus. Its function is as follows. May act as a component of a corepressor complex that represses transcription. This chain is REST corepressor 3 (RCOR3), found in Homo sapiens (Human).